A 405-amino-acid chain; its full sequence is Diaminopimelate decarboxylase (405 aa).

The residue at position 46 (Lys-46) is an N6-(pyridoxal phosphate)lysine. Residues Gly-225 and 259-262 (EPGR) contribute to the pyridoxal 5'-phosphate site. Substrate-binding residues include Arg-262, Arg-298, and Tyr-302. Catalysis depends on Cys-329, which acts as the Proton donor. Residues Glu-330 and Tyr-358 each coordinate substrate. A pyridoxal 5'-phosphate-binding site is contributed by Tyr-358.

This sequence belongs to the Orn/Lys/Arg decarboxylase class-II family. LysA subfamily. As to quaternary structure, homodimer. Requires pyridoxal 5'-phosphate as cofactor.

It catalyses the reaction meso-2,6-diaminopimelate + H(+) = L-lysine + CO2. Its pathway is amino-acid biosynthesis; L-lysine biosynthesis via DAP pathway; L-lysine from DL-2,6-diaminopimelate: step 1/1. Its function is as follows. Specifically catalyzes the decarboxylation of meso-diaminopimelate (meso-DAP) to L-lysine. The polypeptide is Diaminopimelate decarboxylase (Helicobacter pylori (Campylobacter pylori)).